Here is a 115-residue protein sequence, read N- to C-terminus: NADH-ubiquinone oxidoreductase chain 3 (115 aa).

Transmembrane regions (helical) follow at residues 3-23 (LMAT…IAFW), 55-75 (FFLV…LLPL), and 86-106 (LTLL…AYEW).

This sequence belongs to the complex I subunit 3 family. Core subunit of respiratory chain NADH dehydrogenase (Complex I) which is composed of 45 different subunits. Interacts with TMEM186. Interacts with TMEM242.

It localises to the mitochondrion inner membrane. The enzyme catalyses a ubiquinone + NADH + 5 H(+)(in) = a ubiquinol + NAD(+) + 4 H(+)(out). Core subunit of the mitochondrial membrane respiratory chain NADH dehydrogenase (Complex I) which catalyzes electron transfer from NADH through the respiratory chain, using ubiquinone as an electron acceptor. Essential for the catalytic activity of complex I. In Mammuthus primigenius (Siberian woolly mammoth), this protein is NADH-ubiquinone oxidoreductase chain 3.